A 309-amino-acid polypeptide reads, in one-letter code: Glutaminase (309 aa).

Substrate is bound by residues Ser65, Asn117, Glu162, Asn169, Tyr193, Tyr245, and Val263.

It belongs to the glutaminase family. In terms of assembly, homotetramer.

It carries out the reaction L-glutamine + H2O = L-glutamate + NH4(+). The chain is Glutaminase from Bacillus cytotoxicus (strain DSM 22905 / CIP 110041 / 391-98 / NVH 391-98).